Here is a 136-residue protein sequence, read N- to C-terminus: Large ribosomal subunit protein eL27 (136 aa).

The 36-residue stretch at 5-40 folds into the KOW domain; sequence MKPGKVVLVLAGRYSGRKAVIVKNIDDGTSDRPYSH. An N6-acetyllysine mark is found at Lys27 and Lys93.

Belongs to the eukaryotic ribosomal protein eL27 family. As to quaternary structure, component of the large ribosomal subunit. Interacts with RRP1B. Component of the large ribosomal subunit. Interacts with RRP1B. Interacts with DHX33.

It is found in the cytoplasm. It localises to the cytosol. The protein localises to the rough endoplasmic reticulum. Component of the large ribosomal subunit. Required for proper rRNA processing and maturation of 28S and 5.8S rRNAs. The protein is Large ribosomal subunit protein eL27 (RPL27) of Canis lupus familiaris (Dog).